A 252-amino-acid chain; its full sequence is Phosphomannomutase (252 aa).

The active-site Nucleophile is the aspartate 13. Residues aspartate 13 and aspartate 15 each coordinate Mg(2+). The Proton donor/acceptor role is filled by aspartate 15. Alpha-D-mannose 1-phosphate is bound by residues arginine 22, arginine 124, arginine 135, arginine 142, serine 180, and aspartate 182. Mg(2+) is bound by residues aspartate 208, tyrosine 220, and threonine 225.

This sequence belongs to the eukaryotic PMM family. Homodimer. It depends on Mg(2+) as a cofactor. As to expression, expressed in roots, stems, leaves, flowers and immature fruits.

It localises to the cytoplasm. The catalysed reaction is alpha-D-mannose 1-phosphate = D-mannose 6-phosphate. Its pathway is nucleotide-sugar biosynthesis; GDP-alpha-D-mannose biosynthesis; alpha-D-mannose 1-phosphate from D-fructose 6-phosphate: step 2/2. Its function is as follows. Catalyzes the interconversion of mannose-6-phosphate to mannose-1-phosphate, the precursor for the synthesis of GDP-mannose. GDP-mannose is an essential sugar nucleotide for the synthesis of D-mannose-containing cell wall polysaccharides (galactomannans and glucomannans), glycolipids, glycoproteins and the antioxidant L-ascorbate. Can complement the yeast temperature-sensitive mutant sec53-6. The sequence is that of Phosphomannomutase from Nicotiana benthamiana.